The chain runs to 101 residues: Protein Tat (101 aa).

The segment covering 1 to 12 (MEPVDPRLEPWK) has biased composition (basic and acidic residues). Residues 1 to 24 (MEPVDPRLEPWKHPGSQPKTASNN) form a disordered region. Residues 1 to 24 (MEPVDPRLEPWKHPGSQPKTASNN) are interaction with human CREBBP. Residues 1-48 (MEPVDPRLEPWKHPGSQPKTASNNCYCKRCCLHCQVCFTKKGLGISYG) are transactivation. The tract at residues 22–37 (SNNCYCKRCCLHCQVC) is cysteine-rich. Zn(2+) contacts are provided by C25 and C27. The residue at position 28 (K28) is an N6-acetyllysine; by host PCAF. Zn(2+)-binding residues include C30, H33, C34, and C37. The segment at 38–48 (FTKKGLGISYG) is core. Residues 45-101 (ISYGRKKRRQRRRAPQDSKTHQVSLSKQPASQPRGDPTGPKESKKKVERETETDPED) form a disordered region. Residues 48–57 (GRKKRRQRRR) show a composition bias toward basic residues. Positions 49 to 57 (RKKRRQRRR) match the Nuclear localization signal, RNA-binding (TAR), and protein transduction motif. Residues 49–86 (RKKRRQRRRAPQDSKTHQVSLSKQPASQPRGDPTGPKE) are interaction with the host capping enzyme RNGTT. K50 and K51 each carry N6-acetyllysine; by host EP300 and GCN5L2. Residues R52 and R53 each carry the asymmetric dimethylarginine; by host PRMT6 modification. Polar residues predominate over residues 65–75 (HQVSLSKQPAS). A Glycyl lysine isopeptide (Lys-Gly) (interchain with G-Cter in ubiquitin) cross-link involves residue K71. A Cell attachment site motif is present at residues 78-80 (RGD). Residues 83 to 101 (GPKESKKKVERETETDPED) are compositionally biased toward basic and acidic residues.

The protein belongs to the lentiviruses Tat family. As to quaternary structure, interacts with host CCNT1. Associates with the P-TEFb complex composed at least of Tat, P-TEFb (CDK9 and CCNT1), TAR RNA, RNA Pol II. Recruits the HATs CREBBP, TAF1/TFIID, EP300, PCAF and GCN5L2. Interacts with host KAT5/Tip60; this interaction targets the latter to degradation. Interacts with the host deacetylase SIRT1. Interacts with host capping enzyme RNGTT; this interaction stimulates RNGTT. Binds to host KDR, and to the host integrins ITGAV/ITGB3 and ITGA5/ITGB1. Interacts with host KPNB1/importin beta-1 without previous binding to KPNA1/importin alpha-1. Interacts with EIF2AK2. Interacts with host nucleosome assembly protein NAP1L1; this interaction may be required for the transport of Tat within the nucleus, since the two proteins interact at the nuclear rim. Interacts with host C1QBP/SF2P32; this interaction involves lysine-acetylated Tat. Interacts with the host chemokine receptors CCR2, CCR3 and CXCR4. Interacts with host DPP4/CD26; this interaction may trigger an anti-proliferative effect. Interacts with host LDLR. Interacts with the host extracellular matrix metalloproteinase MMP1. Interacts with host PRMT6; this interaction mediates Tat's methylation. Interacts with, and is ubiquitinated by MDM2/Hdm2. Interacts with host PSMC3 and HTATIP2. Interacts with STAB1; this interaction may overcome SATB1-mediated repression of IL2 and IL2RA (interleukin) in T cells by binding to the same domain than HDAC1. Interacts (when acetylated) with human CDK13, thereby increasing HIV-1 mRNA splicing and promoting the production of the doubly spliced HIV-1 protein Nef. Interacts with host TBP; this interaction modulates the activity of transcriptional pre-initiation complex. Interacts with host RELA. Interacts with host PLSCR1; this interaction negatively regulates Tat transactivation activity by altering its subcellular distribution. Asymmetrical arginine methylation by host PRMT6 seems to diminish the transactivation capacity of Tat and affects the interaction with host CCNT1. In terms of processing, acetylation by EP300, CREBBP, GCN5L2/GCN5 and PCAF regulates the transactivation activity of Tat. EP300-mediated acetylation of Lys-50 promotes dissociation of Tat from the TAR RNA through the competitive binding to PCAF's bromodomain. In addition, the non-acetylated Tat's N-terminus can also interact with PCAF. PCAF-mediated acetylation of Lys-28 enhances Tat's binding to CCNT1. Lys-50 is deacetylated by SIRT1. Post-translationally, polyubiquitination by host MDM2 does not target Tat to degradation, but activates its transactivation function and fosters interaction with CCNT1 and TAR RNA. Phosphorylated by EIF2AK2 on serine and threonine residues adjacent to the basic region important for TAR RNA binding and function. Phosphorylation of Tat by EIF2AK2 is dependent on the prior activation of EIF2AK2 by dsRNA.

The protein localises to the host nucleus. It localises to the host nucleolus. The protein resides in the host cytoplasm. It is found in the secreted. Functionally, transcriptional activator that increases RNA Pol II processivity, thereby increasing the level of full-length viral transcripts. Recognizes a hairpin structure at the 5'-LTR of the nascent viral mRNAs referred to as the transactivation responsive RNA element (TAR) and recruits the cyclin T1-CDK9 complex (P-TEFb complex) that will in turn hyperphosphorylate the RNA polymerase II to allow efficient elongation. The CDK9 component of P-TEFb and other Tat-activated kinases hyperphosphorylate the C-terminus of RNA Pol II that becomes stabilized and much more processive. Other factors such as HTATSF1/Tat-SF1, SUPT5H/SPT5, and HTATIP2 are also important for Tat's function. Besides its effect on RNA Pol II processivity, Tat induces chromatin remodeling of proviral genes by recruiting the histone acetyltransferases (HATs) CREBBP, EP300 and PCAF to the chromatin. This also contributes to the increase in proviral transcription rate, especially when the provirus integrates in transcriptionally silent region of the host genome. To ensure maximal activation of the LTR, Tat mediates nuclear translocation of NF-kappa-B by interacting with host RELA. Through its interaction with host TBP, Tat may also modulate transcription initiation. Tat can reactivate a latently infected cell by penetrating in it and transactivating its LTR promoter. In the cytoplasm, Tat is thought to act as a translational activator of HIV-1 mRNAs. Its function is as follows. Extracellular circulating Tat can be endocytosed by surrounding uninfected cells via the binding to several surface receptors such as CD26, CXCR4, heparan sulfate proteoglycans (HSPG) or LDLR. Neurons are rarely infected, but they internalize Tat via their LDLR. Through its interaction with nuclear HATs, Tat is potentially able to control the acetylation-dependent cellular gene expression. Modulates the expression of many cellular genes involved in cell survival, proliferation or in coding for cytokines or cytokine receptors. Tat plays a role in T-cell and neurons apoptosis. Tat induced neurotoxicity and apoptosis probably contribute to neuroAIDS. Circulating Tat also acts as a chemokine-like and/or growth factor-like molecule that binds to specific receptors on the surface of the cells, affecting many cellular pathways. In the vascular system, Tat binds to ITGAV/ITGB3 and ITGA5/ITGB1 integrins dimers at the surface of endothelial cells and competes with bFGF for heparin-binding sites, leading to an excess of soluble bFGF. The chain is Protein Tat from Homo sapiens (Human).